The following is a 102-amino-acid chain: PE family immunomodulator PE5 (102 aa).

In terms of domain architecture, PE spans 3 to 92 (LRVVPEGLAA…GASYLAGDAA (90 aa)).

It belongs to the mycobacterial PE family.

It localises to the secreted. The protein localises to the cell envelope. The protein resides in the cell surface. Functionally, important for the siderophore-mediated iron-acquisition function of ESX-3. May play a pivotal role in the evasion of host immune response by M.tuberculosis. Mediates production of IL-10 via activation of the p38 and ERK1/2 mitogen-activated protein kinase (MAPK) signaling pathways. In Mycobacterium tuberculosis (strain ATCC 25618 / H37Rv), this protein is PE family immunomodulator PE5.